A 467-amino-acid chain; its full sequence is UTP--glucose-1-phosphate uridylyltransferase (467 aa).

UTP-binding positions include 83-86, Lys-97, Gln-160, and Gly-189; that span reads LNGG. 85–86 provides a ligand contact to substrate; that stretch reads GG. Substrate contacts are provided by residues His-190 and 218 to 220; that span reads NSD. Positions 220 and 358 each coordinate UTP.

This sequence belongs to the UDPGP type 1 family.

It localises to the cytoplasm. It carries out the reaction alpha-D-glucose 1-phosphate + UTP + H(+) = UDP-alpha-D-glucose + diphosphate. In terms of biological role, plays a central role as a glucosyl donor in cellular metabolic pathways. This is UTP--glucose-1-phosphate uridylyltransferase (UGPA) from Musa acuminata (Banana).